A 228-amino-acid chain; its full sequence is Translin (228 aa).

The DNA/RNA binding stretch occupies residues 86–90 (RFHEH). The leucine-zipper stretch occupies residues 177-198 (LDSGFRLLNLKNDSLRKRYDGL). N6-acetyllysine is present on lysine 187. Serine 190 is modified (phosphoserine). Lysine 199 carries the N6-acetyllysine modification.

This sequence belongs to the translin family. In terms of assembly, ring-shaped heterooctamer of six TSN and two TSNAX subunits, DNA/RNA binding occurs inside the ring.

It localises to the cytoplasm. The protein resides in the nucleus. In terms of biological role, DNA-binding protein that specifically recognizes consensus sequences at the breakpoint junctions in chromosomal translocations, mostly involving immunoglobulin (Ig)/T-cell receptor gene segments. Seems to recognize single-stranded DNA ends generated by staggered breaks occurring at recombination hot spots. Exhibits both single-stranded and double-stranded endoribonuclease activity. May act as an activator of RNA-induced silencing complex (RISC) by facilitating endonucleolytic cleavage of the siRNA passenger strand. The chain is Translin (TSN) from Pongo abelii (Sumatran orangutan).